The primary structure comprises 471 residues: MATYALSQAHREQMEKSLVDSDPEIAQIMEKEIQRQRESILLIASENVTSRAVFDALGSPMSNKYSEGYPGARYYGGNQHIDAIELTCQARALKAFNLDPEKWGVNVQCLSGSPANLEVYQALMRPHDRLMGLDLPHGGHLSHGYQTPSRKISAVSTYFETFPYRVNTETGIIDYDTLEANAELYRPKCLVAGTSAYCRLIDYGRMRKIADKVGAYLIVDMAHISGLVAAGVIPSPFEYADVVTTTTHKSLRGPRGAMIFFRKGVRSTDPKTGKEIMYDLEGPINFSVFPGHQGGPHNHTITALAVALKQAATPEFRQYQEQVLKNAKALEVEFKALGHKLVSDGTDSHMVLLDLRPKGLDGARVEAVLEQINIACNKNSIPGDKSALTPCGIRIGTPAMTSRGMSEEDFKRVARYIDQVINLCKSIQADLPKEANKLKDFKAKVASGSVPEILALRKEVAEWASTYPLPV.

Lys-249 is subject to N6-(pyridoxal phosphate)lysine.

The protein belongs to the SHMT family. The cofactor is pyridoxal 5'-phosphate.

It is found in the cytoplasm. Its subcellular location is the cytosol. The catalysed reaction is (6R)-5,10-methylene-5,6,7,8-tetrahydrofolate + glycine + H2O = (6S)-5,6,7,8-tetrahydrofolate + L-serine. It participates in one-carbon metabolism; tetrahydrofolate interconversion. Functionally, catalyzes the interconversion of serine and glycine. Essential for viability and required for virulence in a murine model of established pulmonary infection. This is Serine hydroxymethyltransferase, cytosolic from Aspergillus fumigatus (strain ATCC MYA-4609 / CBS 101355 / FGSC A1100 / Af293) (Neosartorya fumigata).